A 226-amino-acid polypeptide reads, in one-letter code: DnaJ homolog subfamily C member 30, mitochondrial (226 aa).

A mitochondrion-targeting transit peptide spans 1 to 38 (MAAMRWRWWQRLLPWRLLQARGFPQNSAPSLGLGARTY). Residues 49–114 (ALYDLLGVPS…TLRRKYDRGL (66 aa)) form the J domain. The segment at 116-157 (SDEDLRGPGVRPSRTPAPDPGSPRTPPPTSRTHDGSRASPGA) is disordered. Residues 130-144 (TPAPDPGSPRTPPPT) are compositionally biased toward pro residues. Residues 208-225 (DTAAIFLIFSIFIIIGFY) form a helical membrane-spanning segment.

As to quaternary structure, associates with the ATP synthase complex. Interacts with MT-ATP6; interaction is direct. Interacts with ATP5MC2; interaction is direct. As to expression, expressed in brain, heart, kidney, liver, lung, spleen, stomach and testis. Highly expressed in the brain. In the neocortex, expressed in most, if not all, glutamatergic excitatory projection neurons (pyramidal) and many interneurons, with the strongest signal noticeably in large pyramidal neurons of layer 3C. Also present in pyramidal neurons of layer 3C PNs of the superior temporal cortex, as well as in pyramidal neurons (Betz cells) of the layer 5B primary motor cortex (at protein level).

It is found in the mitochondrion inner membrane. In terms of biological role, mitochondrial protein enriched in neurons that acts as a regulator of mitochondrial respiration. Associates with the ATP synthase complex and facilitates ATP synthesis. May be a chaperone protein involved in the turnover of the subunits of mitochondrial complex I N-module. It facilitates the degradation of N-module subunits damaged by oxidative stress, and contributes to complex I functional efficiency. The chain is DnaJ homolog subfamily C member 30, mitochondrial from Homo sapiens (Human).